The chain runs to 156 residues: Small ribosomal subunit protein uS7 (156 aa).

This sequence belongs to the universal ribosomal protein uS7 family. In terms of assembly, part of the 30S ribosomal subunit. Contacts proteins S9 and S11.

In terms of biological role, one of the primary rRNA binding proteins, it binds directly to 16S rRNA where it nucleates assembly of the head domain of the 30S subunit. Is located at the subunit interface close to the decoding center, probably blocks exit of the E-site tRNA. This is Small ribosomal subunit protein uS7 from Leptothrix cholodnii (strain ATCC 51168 / LMG 8142 / SP-6) (Leptothrix discophora (strain SP-6)).